The primary structure comprises 290 residues: Ribosomal RNA small subunit methyltransferase A (290 aa).

Residues Asn-27, Leu-29, Gly-54, Glu-75, Asp-100, and Asn-125 each coordinate S-adenosyl-L-methionine.

Belongs to the class I-like SAM-binding methyltransferase superfamily. rRNA adenine N(6)-methyltransferase family. RsmA subfamily.

It is found in the cytoplasm. The catalysed reaction is adenosine(1518)/adenosine(1519) in 16S rRNA + 4 S-adenosyl-L-methionine = N(6)-dimethyladenosine(1518)/N(6)-dimethyladenosine(1519) in 16S rRNA + 4 S-adenosyl-L-homocysteine + 4 H(+). Specifically dimethylates two adjacent adenosines (A1518 and A1519) in the loop of a conserved hairpin near the 3'-end of 16S rRNA in the 30S particle. May play a critical role in biogenesis of 30S subunits. The polypeptide is Ribosomal RNA small subunit methyltransferase A (Streptococcus pneumoniae (strain ATCC 700669 / Spain 23F-1)).